The following is a 338-amino-acid chain: Ketol-acid reductoisomerase (NADP(+)) (338 aa).

The region spanning 1 to 181 is the KARI N-terminal Rossmann domain; the sequence is MNVYYDKDCD…GGGRSGIIET (181 aa). Residues 24 to 27, R47, S50, S52, and 82 to 85 each bind NADP(+); these read YGSQ and DEFQ. Residue H107 is part of the active site. G133 is a binding site for NADP(+). The region spanning 182 to 327 is the KARI C-terminal knotted domain; sequence TFKDETETDL…AKLRGMMPWI (146 aa). D190, E194, E226, and E230 together coordinate Mg(2+). S251 lines the substrate pocket.

It belongs to the ketol-acid reductoisomerase family. It depends on Mg(2+) as a cofactor.

The catalysed reaction is (2R)-2,3-dihydroxy-3-methylbutanoate + NADP(+) = (2S)-2-acetolactate + NADPH + H(+). It catalyses the reaction (2R,3R)-2,3-dihydroxy-3-methylpentanoate + NADP(+) = (S)-2-ethyl-2-hydroxy-3-oxobutanoate + NADPH + H(+). It functions in the pathway amino-acid biosynthesis; L-isoleucine biosynthesis; L-isoleucine from 2-oxobutanoate: step 2/4. The protein operates within amino-acid biosynthesis; L-valine biosynthesis; L-valine from pyruvate: step 2/4. Involved in the biosynthesis of branched-chain amino acids (BCAA). Catalyzes an alkyl-migration followed by a ketol-acid reduction of (S)-2-acetolactate (S2AL) to yield (R)-2,3-dihydroxy-isovalerate. In the isomerase reaction, S2AL is rearranged via a Mg-dependent methyl migration to produce 3-hydroxy-3-methyl-2-ketobutyrate (HMKB). In the reductase reaction, this 2-ketoacid undergoes a metal-dependent reduction by NADPH to yield (R)-2,3-dihydroxy-isovalerate. This chain is Ketol-acid reductoisomerase (NADP(+)), found in Psychrobacter cryohalolentis (strain ATCC BAA-1226 / DSM 17306 / VKM B-2378 / K5).